The primary structure comprises 562 residues: Proton channel OTOP2 (562 aa).

The disordered stretch occupies residues 1 to 20 (MSEELAQGPKESPPAPRAGP). The next 12 membrane-spanning stretches (helical) occupy residues 30–50 (LLSVLLAVNVLLLACTLISGG), 62–82 (VFALLTAMMLLATLWILFYLL), 100–120 (PIWLRGGLVLFGICTLIMDVF), 137–157 (ILHPLIQAVFVIIQTYFLWVS), 169–189 (TWCGLMFTLTTNLAIWMAAVV), 241–261 (FYLYPFNIEYSLFASTMLYVM), 289–309 (FFAGPVLGLLLFVVGLAVFII), 324–344 (ALVIYYSFNIVCLGLTTLVSL), 371–391 (LLMGAALGQYAISYYSIVAVV), 402–422 (LNLTHALLMIAQHTFQNMFII), 495–515 (DISLFLLLCNVILWIMPAFGA), and 527–547 (FYGYSLWAVIVNICLPFGIFY).

It belongs to the otopetrin family.

The protein localises to the cell membrane. It catalyses the reaction H(+)(in) = H(+)(out). With respect to regulation, actives at neutral and alkaline extracellular pH, acid extracellular pH appears to inhibit the channel. Insensitive to activation by Zn(2+). Functionally, proton-selective ion channel open at neutral pH. Actives at neutral and alkaline extracellular pH, likely participates in some alkali-related physiological activities. The sequence is that of Proton channel OTOP2 from Homo sapiens (Human).